We begin with the raw amino-acid sequence, 134 residues long: Complexin-2 (134 aa).

The interval 1–114 is disordered; sequence MDFVMKQALG…CGDEDEEDEE (114 aa). Positions 15 to 85 are enriched in basic and acidic residues; the sequence is DMGKMLGGDE…EEKEAEEKAA (71 aa). Positions 29 to 84 form a coiled coil; sequence DAQKKEEERQEALRQQEDERKQKHIRMETEREKVRQQIRDKYGLKKKEEKEAEEKA.

The protein belongs to the complexin/synaphin family. As to quaternary structure, binds to the SNARE core complex containing SNAP25, VAMP2 and STX1A. Nervous system. Present in electric organ (at protein level).

It is found in the cytoplasm. Its subcellular location is the cytosol. The protein resides in the presynapse. The protein localises to the nucleus. It localises to the perikaryon. Its function is as follows. Positively regulates a late step in synaptic vesicle exocytosis. The protein is Complexin-2 of Narke japonica (Japanese sleeper ray).